A 229-amino-acid polypeptide reads, in one-letter code: Triosephosphate isomerase (229 aa).

Asn6–Lys8 contacts substrate. His88 (electrophile) is an active-site residue. The active-site Proton acceptor is Glu157. Residues Gly163 and Ser193 each contribute to the substrate site.

Belongs to the triosephosphate isomerase family. Homodimer.

The protein localises to the cytoplasm. The catalysed reaction is D-glyceraldehyde 3-phosphate = dihydroxyacetone phosphate. It functions in the pathway carbohydrate biosynthesis; gluconeogenesis. It participates in carbohydrate degradation; glycolysis; D-glyceraldehyde 3-phosphate from glycerone phosphate: step 1/1. Involved in the gluconeogenesis. Catalyzes stereospecifically the conversion of dihydroxyacetone phosphate (DHAP) to D-glyceraldehyde-3-phosphate (G3P). The protein is Triosephosphate isomerase of Sulfurovum sp. (strain NBC37-1).